Reading from the N-terminus, the 186-residue chain is GTP cyclohydrolase 1 (186 aa).

Residues cysteine 78, histidine 81, and cysteine 150 each contribute to the Zn(2+) site.

The protein belongs to the GTP cyclohydrolase I family. Toroid-shaped homodecamer, composed of two pentamers of five dimers.

It carries out the reaction GTP + H2O = 7,8-dihydroneopterin 3'-triphosphate + formate + H(+). The protein operates within cofactor biosynthesis; 7,8-dihydroneopterin triphosphate biosynthesis; 7,8-dihydroneopterin triphosphate from GTP: step 1/1. This Enterococcus faecalis (strain ATCC 700802 / V583) protein is GTP cyclohydrolase 1.